The chain runs to 181 residues: Adenylyl-sulfate kinase (181 aa).

Position 13–20 (13–20 (GVSGAGKS)) interacts with ATP. Ser87 (phosphoserine intermediate) is an active-site residue.

The protein belongs to the APS kinase family.

The enzyme catalyses adenosine 5'-phosphosulfate + ATP = 3'-phosphoadenylyl sulfate + ADP + H(+). The protein operates within sulfur metabolism; hydrogen sulfide biosynthesis; sulfite from sulfate: step 2/3. Catalyzes the synthesis of activated sulfate. The polypeptide is Adenylyl-sulfate kinase (Burkholderia ambifaria (strain ATCC BAA-244 / DSM 16087 / CCUG 44356 / LMG 19182 / AMMD) (Burkholderia cepacia (strain AMMD))).